We begin with the raw amino-acid sequence, 638 residues long: Adhesion G-protein coupled receptor F2 (638 aa).

A signal peptide spans 1–25; the sequence is MISARWLYCLVLLLATESCRLFCQA. The Extracellular portion of the chain corresponds to 26–386; that stretch reads ASKSKENVMP…ESPVLTYITY (361 aa). 5 N-linked (GlcNAc...) asparagine glycosylation sites follow: N155, N219, N248, N293, and N311. One can recognise a GAIN-B domain in the interval 233–377; the sequence is PRNSLGKNFT…SILMSPNTVE (145 aa). Disulfide bonds link C329–C356 and C344–C358. Residues 329 to 377 are GPS; that stretch reads CVGWHSLESRWDRRACKMIQENSRQAICRCQPNKFFTSFSILMSPNTVE. The helical transmembrane segment at 387 to 407 threads the bilayer; the sequence is IGLGISICSLIICLAIEALVW. Residues 408 to 422 lie on the Cytoplasmic side of the membrane; the sequence is SQVTKTEISYLRHLC. A helical membrane pass occupies residues 423 to 443; it reads IANIAVTLLMADVWFIVASFL. Over 444-465 the chain is Extracellular; the sequence is SGPIVHHNGCVTATFFVHFFYL. A helical transmembrane segment spans residues 466-486; that stretch reads SVFFWMLAKALLILYGILIVF. Over 487-493 the chain is Cytoplasmic; sequence HTLPKSC. Residues 494–514 traverse the membrane as a helical segment; it reads LVASLFTVGYGCPLVIAVITL. Topologically, residues 515–541 are extracellular; sequence AVTEPGKGYLRPEACWLNWDMTKALLA. A helical transmembrane segment spans residues 542–562; it reads FVVPALAIVVVNLITVTLVII. The Cytoplasmic segment spans residues 563 to 586; that stretch reads KTQRAAVGSSMFQEVRAIVRICKN. A helical membrane pass occupies residues 587 to 607; that stretch reads IAILTPLLGLTWGFGIATVVA. The Extracellular segment spans residues 608 to 610; it reads GHS. A helical transmembrane segment spans residues 611 to 631; the sequence is LAFHIIFSLLNALQVSPDAMI. Topologically, residues 632–638 are cytoplasmic; the sequence is ESEWRGC.

This sequence belongs to the G-protein coupled receptor 2 family. Adhesion G-protein coupled receptor (ADGR) subfamily.

Its subcellular location is the membrane. Functionally, orphan receptor. In Rattus norvegicus (Rat), this protein is Adhesion G-protein coupled receptor F2 (Adgrf2).